A 158-amino-acid polypeptide reads, in one-letter code: uncharacterized protein (158 aa).

Residues Met-1–Ser-18 are compositionally biased toward polar residues. Disordered stretches follow at residues Met-1–Gly-20, Leu-66–Leu-94, and Gly-111–Phe-158. Positions Arg-72–Ser-90 are enriched in low complexity. Polar residues-rich tracts occupy residues Gly-111–Gly-120 and Leu-149–Phe-158.

This is an uncharacterized protein from Homo sapiens (Human).